Reading from the N-terminus, the 241-residue chain is Ubiquinone biosynthesis O-methyltransferase (241 aa).

S-adenosyl-L-methionine contacts are provided by arginine 46, glycine 66, aspartate 87, and methionine 131.

The protein belongs to the methyltransferase superfamily. UbiG/COQ3 family.

It catalyses the reaction a 3-demethylubiquinol + S-adenosyl-L-methionine = a ubiquinol + S-adenosyl-L-homocysteine + H(+). It carries out the reaction a 3-(all-trans-polyprenyl)benzene-1,2-diol + S-adenosyl-L-methionine = a 2-methoxy-6-(all-trans-polyprenyl)phenol + S-adenosyl-L-homocysteine + H(+). The protein operates within cofactor biosynthesis; ubiquinone biosynthesis. Functionally, O-methyltransferase that catalyzes the 2 O-methylation steps in the ubiquinone biosynthetic pathway. This chain is Ubiquinone biosynthesis O-methyltransferase, found in Bordetella avium (strain 197N).